Reading from the N-terminus, the 406-residue chain is Cysteine desulfurase (406 aa).

Lysine 226 carries the N6-(pyridoxal phosphate)lysine modification. Cysteine 364 functions as the Cysteine persulfide intermediate in the catalytic mechanism.

This sequence belongs to the class-V pyridoxal-phosphate-dependent aminotransferase family. Csd subfamily. Homodimer. Interacts with SufE and the SufBCD complex composed of SufB, SufC and SufD. The interaction with SufE is required to mediate the direct transfer of the sulfur atom from the S-sulfanylcysteine. It depends on pyridoxal 5'-phosphate as a cofactor.

It is found in the cytoplasm. The enzyme catalyses (sulfur carrier)-H + L-cysteine = (sulfur carrier)-SH + L-alanine. The catalysed reaction is L-selenocysteine + AH2 = hydrogenselenide + L-alanine + A + H(+). It participates in cofactor biosynthesis; iron-sulfur cluster biosynthesis. In terms of biological role, cysteine desulfurases mobilize the sulfur from L-cysteine to yield L-alanine, an essential step in sulfur metabolism for biosynthesis of a variety of sulfur-containing biomolecules. Component of the suf operon, which is activated and required under specific conditions such as oxidative stress and iron limitation. Acts as a potent selenocysteine lyase in vitro, that mobilizes selenium from L-selenocysteine. Selenocysteine lyase activity is however unsure in vivo. This Salmonella heidelberg (strain SL476) protein is Cysteine desulfurase.